Consider the following 355-residue polypeptide: Heat-inducible transcription repressor HrcA (355 aa).

This sequence belongs to the HrcA family.

In terms of biological role, negative regulator of class I heat shock genes (grpE-dnaK-dnaJ and groELS operons). Prevents heat-shock induction of these operons. The protein is Heat-inducible transcription repressor HrcA of Prosthecochloris aestuarii (strain DSM 271 / SK 413).